Consider the following 374-residue polypeptide: Acetylxylan esterase (374 aa).

A signal peptide spans 1-22 (MVFSPRLSAFVALVALTNAATA). A CBM1 domain is found at 23–57 (VPMYGQCGGSGYTGPTQCDPGLVCVKLNDWYSQCQ). Residues 58–99 (SGGAQPPVTTTSSPPVTVSPPPSTTTVAPPVATGPPAPEIPA) are ser/Thr/Pro-rich linker. The segment at 60 to 86 (GAQPPVTTTSSPPVTVSPPPSTTTVAP) is disordered. Residues 63 to 73 (PPVTTTSSPPV) show a composition bias toward low complexity. Positions 100–374 (GQLTQLRSFG…EVVAMDFFGL (275 aa)) are catalytic. Asn114 carries N-linked (GlcNAc...) asparagine glycosylation. Residue Ser219 is the Charge relay system of the active site. Residue Asn320 is glycosylated (N-linked (GlcNAc...) asparagine).

It belongs to the carbohydrate esterase 1 (CE1) family. AxeA subfamily. Monomer. In terms of processing, glycosylated.

It localises to the secreted. It carries out the reaction Deacetylation of xylans and xylo-oligosaccharides.. It functions in the pathway glycan degradation; xylan degradation. Functionally, acetylxylan esterase involved in the hydrolysis of xylan, a major structural heterogeneous polysaccharide found in plant biomass representing the second most abundant polysaccharide in the biosphere, after cellulose. Degrades acetylated xylans by cleaving acetyl side groups from the hetero-xylan backbone. The chain is Acetylxylan esterase from Coprinopsis cinerea (strain Okayama-7 / 130 / ATCC MYA-4618 / FGSC 9003) (Inky cap fungus).